The chain runs to 221 residues: Ribonuclease T (221 aa).

The Exonuclease domain maps to 20–196 (VVVDLETGGF…YDTERTAELF (177 aa)). Positions 23, 25, 183, and 188 each coordinate Mg(2+). The active-site Proton donor/acceptor is the His-183.

It belongs to the RNase T family. Homodimer. It depends on Mg(2+) as a cofactor.

Trims short 3' overhangs of a variety of RNA species, leaving a one or two nucleotide 3' overhang. Responsible for the end-turnover of tRNA: specifically removes the terminal AMP residue from uncharged tRNA (tRNA-C-C-A). Also appears to be involved in tRNA biosynthesis. The chain is Ribonuclease T from Chromohalobacter salexigens (strain ATCC BAA-138 / DSM 3043 / CIP 106854 / NCIMB 13768 / 1H11).